Here is a 176-residue protein sequence, read N- to C-terminus: ATP synthase subunit delta (176 aa).

It belongs to the ATPase delta chain family. F-type ATPases have 2 components, F(1) - the catalytic core - and F(0) - the membrane proton channel. F(1) has five subunits: alpha(3), beta(3), gamma(1), delta(1), epsilon(1). F(0) has three main subunits: a(1), b(2) and c(10-14). The alpha and beta chains form an alternating ring which encloses part of the gamma chain. F(1) is attached to F(0) by a central stalk formed by the gamma and epsilon chains, while a peripheral stalk is formed by the delta and b chains.

It is found in the cell inner membrane. Functionally, f(1)F(0) ATP synthase produces ATP from ADP in the presence of a proton or sodium gradient. F-type ATPases consist of two structural domains, F(1) containing the extramembraneous catalytic core and F(0) containing the membrane proton channel, linked together by a central stalk and a peripheral stalk. During catalysis, ATP synthesis in the catalytic domain of F(1) is coupled via a rotary mechanism of the central stalk subunits to proton translocation. In terms of biological role, this protein is part of the stalk that links CF(0) to CF(1). It either transmits conformational changes from CF(0) to CF(1) or is implicated in proton conduction. This is ATP synthase subunit delta from Aliarcobacter butzleri (strain RM4018) (Arcobacter butzleri).